The sequence spans 539 residues: GMP synthase [glutamine-hydrolyzing] (539 aa).

Residues 4–203 form the Glutamine amidotransferase type-1 domain; that stretch reads KILILDFGSQ…VHDICGCKSD (200 aa). C82 serves as the catalytic Nucleophile. Residues H177 and E179 contribute to the active site. One can recognise a GMPS ATP-PPase domain in the interval 204-395; the sequence is WNMPDYIAEA…LGLPHDMVYR (192 aa). Residue 231–237 coordinates ATP; that stretch reads SGGVDSS.

As to quaternary structure, homodimer.

The enzyme catalyses XMP + L-glutamine + ATP + H2O = GMP + L-glutamate + AMP + diphosphate + 2 H(+). Its pathway is purine metabolism; GMP biosynthesis; GMP from XMP (L-Gln route): step 1/1. Catalyzes the synthesis of GMP from XMP. This chain is GMP synthase [glutamine-hydrolyzing], found in Janthinobacterium sp. (strain Marseille) (Minibacterium massiliensis).